Reading from the N-terminus, the 320-residue chain is GTP 3',8-cyclase (320 aa).

Residues 5 to 225 (QFGRKINYLR…IQLIKKDEKA (221 aa)) enclose the Radical SAM core domain. Position 14 (arginine 14) interacts with GTP. [4Fe-4S] cluster is bound by residues cysteine 21 and cysteine 25. Tyrosine 27 provides a ligand contact to S-adenosyl-L-methionine. Position 28 (cysteine 28) interacts with [4Fe-4S] cluster. Arginine 64 is a GTP binding site. Glycine 68 contributes to the S-adenosyl-L-methionine binding site. Residue threonine 95 participates in GTP binding. Serine 119 is a binding site for S-adenosyl-L-methionine. Lysine 155 is a GTP binding site. Methionine 189 serves as a coordination point for S-adenosyl-L-methionine. The [4Fe-4S] cluster site is built by cysteine 248 and cysteine 251. 253-255 (RIR) provides a ligand contact to GTP. Cysteine 265 is a binding site for [4Fe-4S] cluster.

Belongs to the radical SAM superfamily. MoaA family. As to quaternary structure, monomer and homodimer. The cofactor is [4Fe-4S] cluster.

It carries out the reaction GTP + AH2 + S-adenosyl-L-methionine = (8S)-3',8-cyclo-7,8-dihydroguanosine 5'-triphosphate + 5'-deoxyadenosine + L-methionine + A + H(+). Its pathway is cofactor biosynthesis; molybdopterin biosynthesis. In terms of biological role, catalyzes the cyclization of GTP to (8S)-3',8-cyclo-7,8-dihydroguanosine 5'-triphosphate. This Campylobacter jejuni (strain RM1221) protein is GTP 3',8-cyclase.